The primary structure comprises 250 residues: Hydroxyacylglutathione hydrolase (250 aa).

Residues His53, His55, Asp57, His58, His110, Asp127, and His165 each coordinate Zn(2+).

Belongs to the metallo-beta-lactamase superfamily. Glyoxalase II family. As to quaternary structure, monomer. Requires Zn(2+) as cofactor.

The enzyme catalyses an S-(2-hydroxyacyl)glutathione + H2O = a 2-hydroxy carboxylate + glutathione + H(+). It functions in the pathway secondary metabolite metabolism; methylglyoxal degradation; (R)-lactate from methylglyoxal: step 2/2. Thiolesterase that catalyzes the hydrolysis of S-D-lactoyl-glutathione to form glutathione and D-lactic acid. This is Hydroxyacylglutathione hydrolase from Buchnera aphidicola subsp. Schizaphis graminum (strain Sg).